We begin with the raw amino-acid sequence, 452 residues long: Ketoisovalerate reductase BEA2 (452 aa).

Residue 70–75 (GPGNIG) coordinates NADP(+). The Proton donor role is filled by Lys-285. Substrate contacts are provided by Asn-289, Asn-293, and Ser-393. Residue Glu-405 coordinates NADP(+).

Belongs to the ketopantoate reductase family.

The enzyme catalyses (R)-2-hydroxy-3-methylbutanoate + NADP(+) = 3-methyl-2-oxobutanoate + NADPH + H(+). Its function is as follows. Ketoisovalerate reductase; part of the gene cluster that mediates the biosynthesis of beauvericin (BEA), a non-ribosomal cyclic hexadepsipeptide that shows antibiotic, antifungal, insecticidal, and cancer cell antiproliferative and antihaptotactic activity. Ketoisovalerate reductase BEA2 catalyzes the NADPH-specific reduction of ketoisovaleric acid to hydroxyisovalerate, a precursor for beauvericin biosynthesis. The nonribosomal cyclodepsipeptide synthetase BEA1 then catalyzes the formation of beauvericin via condensation and cyclization of 3 dipeptidol monomers, each composed of one unit of hydroxyisovalerate and one unit of N-methyl-phenylalanine. The protein is Ketoisovalerate reductase BEA2 of Gibberella fujikuroi (strain CBS 195.34 / IMI 58289 / NRRL A-6831) (Bakanae and foot rot disease fungus).